We begin with the raw amino-acid sequence, 208 residues long: MADRGLLIVFSGPSGVGKGTVRREIFESSENQFQYSVSMTTRAQRPGEVDGVDYFFRTREEFEELIRQGQMLEYAEYVGNYYGTPLTYVNETLDKGIDVFLEIEVQGALQVKKKVPDAVFIFLTPPDLDELQDRLVGRGTDSAEVIAQRIEKAKEEIALMREYDYAIVNDQVSLAAERVKCVIEAEHFCVDRVIGHYQEMLPKSPTTR.

The region spanning 5–184 is the Guanylate kinase-like domain; the sequence is GLLIVFSGPS…AAERVKCVIE (180 aa). 12-19 contributes to the ATP binding site; that stretch reads GPSGVGKG.

Belongs to the guanylate kinase family.

The protein localises to the cytoplasm. The enzyme catalyses GMP + ATP = GDP + ADP. Essential for recycling GMP and indirectly, cGMP. In Streptococcus pneumoniae (strain ATCC BAA-255 / R6), this protein is Guanylate kinase.